The sequence spans 57 residues: Toxin GhoT (57 aa).

2 consecutive transmembrane segments (helical) span residues 7 to 27 (ILIF…FISH) and 37 to 57 (AFLV…FSLF).

It belongs to the GhoT/OrtT toxin family.

It is found in the cell inner membrane. In terms of biological role, toxic component of a type V toxin-antitoxin (TA) system. Causes membrane damage when induced by MqsR, slowing cell growth and leading to the formation of dormant persister cells; involved with GhoS, its antitoxin, in reducing cell growth during antibacterial stress. Its toxic effects are neutralized by GhoS, which digests ghoT transcripts in a sequence-specific manner. In Escherichia coli O157:H7, this protein is Toxin GhoT.